The sequence spans 1101 residues: Coiled-coil domain-containing protein 150 (1101 aa).

Coiled coils occupy residues Arg-106 to Ser-299, Ala-398 to Asn-680, Asp-712 to Gln-940, and Val-970 to Arg-1033. Residues Ser-1055–Val-1071 are compositionally biased toward basic and acidic residues. Positions Ser-1055–Lys-1101 are disordered.

The polypeptide is Coiled-coil domain-containing protein 150 (CCDC150) (Homo sapiens (Human)).